Reading from the N-terminus, the 72-residue chain is Small ribosomal subunit protein bS18 (72 aa).

The protein belongs to the bacterial ribosomal protein bS18 family. In terms of assembly, part of the 30S ribosomal subunit. Forms a tight heterodimer with protein bS6.

Its function is as follows. Binds as a heterodimer with protein bS6 to the central domain of the 16S rRNA, where it helps stabilize the platform of the 30S subunit. This chain is Small ribosomal subunit protein bS18, found in Francisella tularensis subsp. holarctica (strain OSU18).